We begin with the raw amino-acid sequence, 128 residues long: MPTINQLIRKGREPKERKSKSPALMGNPQKRGVCIRVTTMTPKKPNSALRKVARVRLTNGIEVWAYIPGIGHNLQEHSVVLVRGGRVKDLPGVRYHIIRGALDAAGVEGRRQGRSKYGAKRPKEGGKK.

Residues 1–29 form a disordered region; that stretch reads MPTINQLIRKGREPKERKSKSPALMGNPQ. Asp89 carries the 3-methylthioaspartic acid modification. The segment at 106–128 is disordered; it reads GVEGRRQGRSKYGAKRPKEGGKK.

It belongs to the universal ribosomal protein uS12 family. In terms of assembly, part of the 30S ribosomal subunit. Contacts proteins S8 and S17. May interact with IF1 in the 30S initiation complex.

In terms of biological role, with S4 and S5 plays an important role in translational accuracy. Interacts with and stabilizes bases of the 16S rRNA that are involved in tRNA selection in the A site and with the mRNA backbone. Located at the interface of the 30S and 50S subunits, it traverses the body of the 30S subunit contacting proteins on the other side and probably holding the rRNA structure together. The combined cluster of proteins S8, S12 and S17 appears to hold together the shoulder and platform of the 30S subunit. This is Small ribosomal subunit protein uS12 from Dictyoglomus turgidum (strain DSM 6724 / Z-1310).